The following is a 160-amino-acid chain: Large ribosomal subunit protein uL13 (160 aa).

It belongs to the universal ribosomal protein uL13 family. As to quaternary structure, part of the 50S ribosomal subunit.

In terms of biological role, this protein is one of the early assembly proteins of the 50S ribosomal subunit, although it is not seen to bind rRNA by itself. It is important during the early stages of 50S assembly. This Orientia tsutsugamushi (strain Ikeda) (Rickettsia tsutsugamushi) protein is Large ribosomal subunit protein uL13.